A 182-amino-acid polypeptide reads, in one-letter code: Allergen Bla g 4 (182 aa).

The N-terminal stretch at 1-12 (AVLALCATDTLA) is a signal peptide. Asparagine 72 is a glycosylation site (N-linked (GlcNAc...) asparagine).

Belongs to the calycin superfamily. Triabin family.

Its subcellular location is the secreted. Its function is as follows. Probable ligand-binding protein. This is Allergen Bla g 4 from Blattella germanica (German cockroach).